The following is a 502-amino-acid chain: Arabinose import ATP-binding protein AraG (502 aa).

ABC transporter domains follow at residues 5–240 and 253–496; these read LEFS…MVGR and LGGI…LPDK. Residue 37 to 44 participates in ATP binding; sequence GENGAGKS.

The protein belongs to the ABC transporter superfamily. Arabinose importer (TC 3.A.1.2.2) family. As to quaternary structure, the complex is composed of two ATP-binding proteins (AraG), two transmembrane proteins (AraH) and a solute-binding protein (AraF).

The protein resides in the cell inner membrane. The enzyme catalyses L-arabinose(out) + ATP + H2O = L-arabinose(in) + ADP + phosphate + H(+). Its function is as follows. Part of the ABC transporter complex AraFGH involved in arabinose import. Responsible for energy coupling to the transport system. This is Arabinose import ATP-binding protein AraG from Rhizobium johnstonii (strain DSM 114642 / LMG 32736 / 3841) (Rhizobium leguminosarum bv. viciae).